The chain runs to 395 residues: ATP phosphoribosyltransferase regulatory subunit (395 aa).

Belongs to the class-II aminoacyl-tRNA synthetase family. HisZ subfamily. As to quaternary structure, heteromultimer composed of HisG and HisZ subunits.

Its subcellular location is the cytoplasm. It participates in amino-acid biosynthesis; L-histidine biosynthesis; L-histidine from 5-phospho-alpha-D-ribose 1-diphosphate: step 1/9. Its function is as follows. Required for the first step of histidine biosynthesis. May allow the feedback regulation of ATP phosphoribosyltransferase activity by histidine. The protein is ATP phosphoribosyltransferase regulatory subunit of Stutzerimonas stutzeri (Pseudomonas stutzeri).